The following is a 261-amino-acid chain: Potassium/proton antiporter CemA (261 aa).

A run of 2 helical transmembrane segments spans residues 47-67 and 138-158; these read FLVF…GPWV and IISH…YFIM.

This sequence belongs to the CemA family.

The protein resides in the plastid. Its subcellular location is the chloroplast inner membrane. It catalyses the reaction K(+)(in) + H(+)(out) = K(+)(out) + H(+)(in). Its function is as follows. Contributes to K(+)/H(+) antiport activity by supporting proton efflux to control proton extrusion and homeostasis in chloroplasts in a light-dependent manner to modulate photosynthesis. Prevents excessive induction of non-photochemical quenching (NPQ) under continuous-light conditions. Indirectly promotes efficient inorganic carbon uptake into chloroplasts. This is Potassium/proton antiporter CemA from Ginkgo biloba (Ginkgo).